A 144-amino-acid polypeptide reads, in one-letter code: MKIKIINRSHHPLPAYATSASAGMDLRASIEEPITLLPLERRLIPTGLFIELPVGYEAQIRPRSGLALRHGITLVNSPGTIDADYRGEIGIIMINLSNTPFTIADGERICQLVIARHEQAEWVLTDELADTERGAGGFGHTGKE.

Substrate contacts are provided by residues 63–65, N76, and 80–82; these read RSG and TID.

The protein belongs to the dUTPase family. It depends on Mg(2+) as a cofactor.

The catalysed reaction is dUTP + H2O = dUMP + diphosphate + H(+). Its pathway is pyrimidine metabolism; dUMP biosynthesis; dUMP from dCTP (dUTP route): step 2/2. Its function is as follows. This enzyme is involved in nucleotide metabolism: it produces dUMP, the immediate precursor of thymidine nucleotides and it decreases the intracellular concentration of dUTP so that uracil cannot be incorporated into DNA. This Porphyromonas gingivalis (strain ATCC 33277 / DSM 20709 / CIP 103683 / JCM 12257 / NCTC 11834 / 2561) protein is Deoxyuridine 5'-triphosphate nucleotidohydrolase.